The sequence spans 121 residues: Small ribosomal subunit protein uS13 (121 aa).

Positions 91-121 (HRRGLPVRGQNSKNNARTRKGPRRTVANKKK) are disordered. Positions 106–121 (ARTRKGPRRTVANKKK) are enriched in basic residues.

It belongs to the universal ribosomal protein uS13 family. Part of the 30S ribosomal subunit. Forms a loose heterodimer with protein S19. Forms two bridges to the 50S subunit in the 70S ribosome.

Its function is as follows. Located at the top of the head of the 30S subunit, it contacts several helices of the 16S rRNA. In the 70S ribosome it contacts the 23S rRNA (bridge B1a) and protein L5 of the 50S subunit (bridge B1b), connecting the 2 subunits; these bridges are implicated in subunit movement. Contacts the tRNAs in the A and P-sites. This chain is Small ribosomal subunit protein uS13, found in Bacillus cereus (strain AH187).